Reading from the N-terminus, the 345-residue chain is Dihydroorotate dehydrogenase (quinone) (345 aa).

FMN contacts are provided by residues 65–69 (AGLDK) and Thr89. Lys69 provides a ligand contact to substrate. 114–118 (NRMGF) contributes to the substrate binding site. 2 residues coordinate FMN: Asn142 and Asn175. Asn175 is a binding site for substrate. The active-site Nucleophile is the Ser178. Asn180 contacts substrate. 2 residues coordinate FMN: Lys220 and Thr248. A substrate-binding site is contributed by 249–250 (NT). Residues Gly271, Gly300, and 321–322 (YT) contribute to the FMN site.

This sequence belongs to the dihydroorotate dehydrogenase family. Type 2 subfamily. As to quaternary structure, monomer. Requires FMN as cofactor.

Its subcellular location is the cell membrane. It catalyses the reaction (S)-dihydroorotate + a quinone = orotate + a quinol. It participates in pyrimidine metabolism; UMP biosynthesis via de novo pathway; orotate from (S)-dihydroorotate (quinone route): step 1/1. Functionally, catalyzes the conversion of dihydroorotate to orotate with quinone as electron acceptor. The chain is Dihydroorotate dehydrogenase (quinone) from Burkholderia thailandensis (strain ATCC 700388 / DSM 13276 / CCUG 48851 / CIP 106301 / E264).